A 102-amino-acid chain; its full sequence is uncharacterized protein (102 aa).

This is an uncharacterized protein from Sinorhizobium fredii (strain NBRC 101917 / NGR234).